A 54-amino-acid polypeptide reads, in one-letter code: uncharacterized protein (54 aa).

The span at 23–35 shows a compositional bias: basic and acidic residues; that stretch reads DVMQEGETAKELN. The segment at 23–54 is disordered; the sequence is DVMQEGETAKELNYEGEDMQATSSAQNRQTSV. Positions 42 to 54 are enriched in polar residues; it reads QATSSAQNRQTSV.

This is an uncharacterized protein from Bacillus subtilis (strain 168).